The primary structure comprises 40 residues: Antifungal protein ginkbilobin-1 (40 aa).

Residues 3 to 40 form the Gnk2-homologous domain; it reads TAFVSSAHNTQKIPAGAPFNRNLRAMLADLRQNAAFAG. Asparagine 11 contributes to the alpha-D-mannopyranose binding site.

In terms of tissue distribution, expressed in seeds (at the protein level).

Functionally, possesses antifungal activity against B.cinerea, M.arachidicola, F.oxysporum, R.solani and C.comatus and moderate antibacterial activity against S.aureus, P.aeruginosa and E.coli. Inhibits HIV-1 reverse transcriptase and proliferation of murine splenocytes. Exerts antifungal activity through its carbohydrate-binding specificity. This chain is Antifungal protein ginkbilobin-1, found in Ginkgo biloba (Ginkgo).